We begin with the raw amino-acid sequence, 27 residues long: Voltage-dependent anion-selective channel protein (27 aa).

Belongs to the eukaryotic mitochondrial porin family. In terms of assembly, interacts with hexokinases. In terms of tissue distribution, photoreceptors.

It is found in the mitochondrion outer membrane. Its function is as follows. Forms a channel through the cell membrane that allows diffusion of small hydrophilic molecules. The protein is Voltage-dependent anion-selective channel protein of Doryteuthis pealeii (Longfin inshore squid).